Consider the following 194-residue polypeptide: ATP-dependent Clp protease proteolytic subunit (194 aa).

Serine 98 functions as the Nucleophile in the catalytic mechanism. Histidine 123 is an active-site residue.

It belongs to the peptidase S14 family. Component of the chloroplastic Clp protease core complex.

It localises to the plastid. The protein localises to the cyanelle. The catalysed reaction is Hydrolysis of proteins to small peptides in the presence of ATP and magnesium. alpha-casein is the usual test substrate. In the absence of ATP, only oligopeptides shorter than five residues are hydrolyzed (such as succinyl-Leu-Tyr-|-NHMec, and Leu-Tyr-Leu-|-Tyr-Trp, in which cleavage of the -Tyr-|-Leu- and -Tyr-|-Trp bonds also occurs).. Its function is as follows. Cleaves peptides in various proteins in a process that requires ATP hydrolysis. Has a chymotrypsin-like activity. Plays a major role in the degradation of misfolded proteins. This chain is ATP-dependent Clp protease proteolytic subunit (clpP-A), found in Cyanophora paradoxa.